A 182-amino-acid polypeptide reads, in one-letter code: Isopentenyl-diphosphate Delta-isomerase (182 aa).

Positions 25 and 32 each coordinate Mn(2+). The Nudix hydrolase domain occupies 30 to 164 (LLHLAFSSWL…PWAFSPWMVM (135 aa)). The active site involves Cys-67. Position 69 (His-69) interacts with Mn(2+). A Mg(2+)-binding site is contributed by Glu-87. Mn(2+)-binding residues include Glu-114 and Glu-116. Residue Glu-116 is part of the active site.

It belongs to the IPP isomerase type 1 family. Homodimer. Mg(2+) serves as cofactor. It depends on Mn(2+) as a cofactor.

The protein resides in the cytoplasm. The catalysed reaction is isopentenyl diphosphate = dimethylallyl diphosphate. Its pathway is isoprenoid biosynthesis; dimethylallyl diphosphate biosynthesis; dimethylallyl diphosphate from isopentenyl diphosphate: step 1/1. Its function is as follows. Catalyzes the 1,3-allylic rearrangement of the homoallylic substrate isopentenyl (IPP) to its highly electrophilic allylic isomer, dimethylallyl diphosphate (DMAPP). The polypeptide is Isopentenyl-diphosphate Delta-isomerase (Escherichia coli O45:K1 (strain S88 / ExPEC)).